We begin with the raw amino-acid sequence, 205 residues long: Anaerobic dimethyl sulfoxide reductase chain B (205 aa).

4Fe-4S ferredoxin-type domains lie at 5–33, 59–89, and 90–119; these read YGFF…LTPE, FAYY…KRED, and GFVV…YNET. Residues C14, C17, C20, C24, C67, C70, C75, C79, C99, C102, C105, C109, C126, C129, C141, and C145 each coordinate [4Fe-4S] cluster. Residues 184 to 205 form a disordered region; that stretch reads KPNANSRPTGDTTGYLANPKEV. Positions 186-195 are enriched in polar residues; it reads NANSRPTGDT.

Heterotrimeric enzyme composed of a catalytic heterodimer (DmsAB) and a membrane anchor protein (DmsC). Requires [4Fe-4S] cluster as cofactor.

Electron transfer subunit of the terminal reductase during anaerobic growth on various sulfoxide and N-oxide compounds. The sequence is that of Anaerobic dimethyl sulfoxide reductase chain B (dmsB) from Shigella flexneri.